Reading from the N-terminus, the 2547-residue chain is Piezo-type mechanosensitive ion channel component 1 (2547 aa).

Topologically, residues 1-12 (MEPHVLGAGLYW) are cytoplasmic. Residues 13-25 (LLLPCTLLAASLL) traverse the membrane as a helical segment. The Extracellular portion of the chain corresponds to 26–28 (RFN). The helical transmembrane segment at 29–44 (ALSLVYLLFLLLLPWL) threads the bilayer. Topologically, residues 45–58 (PGPSRHSIPGHTGR) are cytoplasmic. The helical transmembrane segment at 59-81 (LLRALLCLSLLFLVAHLAFQICL) threads the bilayer. Topologically, residues 82 to 121 (HTVPHLDQFLGQNGSLWVKVSQHIGVTRLDLKDIFNTTRL) are extracellular. A glycan (N-linked (GlcNAc...) asparagine) is linked at asparagine 94. A helical membrane pass occupies residues 122–138 (VAPDLGVLLASSLCLGL). At 139 to 201 (CGRLTRKAGQ…ASRFRVTAHW (63 aa)) the chain is on the cytoplasmic side. A helical transmembrane segment spans residues 202–221 (LLMTSGRTLVIVLLALAGIA). At 222–223 (HP) the chain is on the extracellular side. Residues 224 to 243 (SAFSSIYLVVFLAICTWWSC) form a helical membrane-spanning segment. Over 244 to 254 (HFPLSPLGFNT) the chain is Cytoplasmic. Residues 255-275 (LCVMVSCFGAGHLICLYCYQT) traverse the membrane as a helical segment. At 276–316 (PFIQDMLPPGNIWARLFGLKNFVDLPNYSSPNALVLNTKHA) the chain is on the extracellular side. The helical transmembrane segment at 317 to 337 (WPIYVSPGILLLLYYTATSLL) threads the bilayer. Over 338–424 (KLHKSCPSEL…EMSPLHGLGH (87 aa)) the chain is Cytoplasmic. The interval 347 to 387 (LRKETPREDEEHELELDHLEPEPQARDATQGEMPMTTEPDL) is disordered. Residues 361–371 (ELDHLEPEPQA) are compositionally biased toward basic and acidic residues. The helical transmembrane segment at 425-445 (LIMDQSYVCALIAMMVWSIMY) threads the bilayer. At 446 to 447 (HS) the chain is on the extracellular side. The chain crosses the membrane as a helical span at residues 448–463 (WLTFVLLLWACLIWTV). Topologically, residues 464–468 (RSRHQ) are cytoplasmic. The helical transmembrane segment at 469–491 (LAMLCSPCILLYGLTLCCLRYVW) threads the bilayer. Residues 492-518 (AMELPELPTTLGPVSLHQLGLEHTRYP) are Extracellular-facing. The chain crosses the membrane as a helical span at residues 519-536 (CLDLGAMLLYLLTFWLLL). At 537–580 (RQFVKEKLLKKQKVPAALLEVTVADTEPTQTQTLLRSLGELVTG) the chain is on the cytoplasmic side. A helical transmembrane segment spans residues 581-601 (IYVKYWIYVCAGMFIVVSFAG). A topological domain (extracellular) is located at residue arginine 602. The helical transmembrane segment at 603–623 (LVVYKIVYMFLFLLCLTLFQV) threads the bilayer. The Cytoplasmic portion of the chain corresponds to 624–633 (YYTLWRKLLR). Residues 634-655 (VFWWLVVAYTMLVLIAVYTFQF) form a helical membrane-spanning segment. Over 656–685 (QDFPTYWRNLTGFTDEQLGDLGLEQFSVSE) the chain is Extracellular. A helical membrane pass occupies residues 686-702 (LFSSILIPGFFLLACIL). Over 703 to 811 (QLHYFHRPFM…RRLLELHVFK (109 aa)) the chain is Cytoplasmic. Position 758 is a phosphoserine (serine 758). A helical transmembrane segment spans residues 812–823 (LVALYTVWVALK). Residues 824 to 826 (EVS) are Extracellular-facing. The helical transmembrane segment at 827-840 (VMNLLLVVLWAFAL) threads the bilayer. The Cytoplasmic portion of the chain corresponds to 841–854 (PYPRFRPMASCLST). The chain crosses the membrane as a helical span at residues 855–869 (VWTCIIIVCKMLYQL). The Extracellular portion of the chain corresponds to 870 to 921 (KIVNPHEYSSNCTEPFPNNTNLQPLEINQSLLYRGPVDPANWFGVRKGYPNL). Residues 922–949 (GYIQNHLQILLLLVFEAVVYRRQEHYRR) form a helical membrane-spanning segment. Residues 950 to 989 (QHQQAPLPAQAVCADGTRQRLDQDLLSCLKYFINFFFYKF) lie on the Cytoplasmic side of the membrane. The helical transmembrane segment at 990–1005 (GLEICFLMAVNVIGQR) threads the bilayer. Over 1006-1007 (MN) the chain is Extracellular. A helical membrane pass occupies residues 1008–1023 (FMVILHGCWLVAILTR). Topologically, residues 1024–1036 (RRREAIARLWPNY) are cytoplasmic. Residues 1037-1052 (CLFLTLFLLYQYLLCL) traverse the membrane as a helical segment. The Extracellular segment spans residues 1053–1091 (GMPPALCIDYPWRWSKAIPMNSALIKWLYLPDFFRAPNS). A helical membrane pass occupies residues 1092–1113 (TNLISDFLLLLCASQQWQVFSA). At 1114–1148 (ERTEEWQRMAGINTDHLEPLRGEPNPIPNFIHCRS) the chain is on the cytoplasmic side. The chain crosses the membrane as a helical span at residues 1149–1175 (YLDMLKVAVFRYLFWLVLVVVFVAGAT). Over 1176–1180 (RISIF) the chain is Extracellular. Residues 1181-1199 (GLGYLLACFYLLLFGTTLL) traverse the membrane as a helical segment. The Cytoplasmic segment spans residues 1200 to 1212 (QKDTRAQLVLWDC). Residues 1213–1231 (LILYNVTVIISKNMLSLLS) traverse the membrane as a helical segment. Residues 1232–1280 (CVFVEQMQSNFCWVIQLFSLVCTVKGYYDPKEMMTRDRDCLLPVEEAGI) are Extracellular-facing. Residues 1281-1297 (IWDSICFFFLLLQRRIF) traverse the membrane as a helical segment. Topologically, residues 1298–1656 (LSHYFLHVSA…ELLLDRRLHI (359 aa)) are cytoplasmic. Positions 1334 to 1365 (HRQIEEKSLAQLKRQMKRIRAKQEKYRQSQAS) form a coiled coil. 3 disordered regions span residues 1354-1396 (AKQE…RRQW), 1456-1480 (RRER…DVEP), and 1567-1610 (TLSG…NTRS). The span at 1361–1372 (QSQASRGQLQSK) shows a compositional bias: polar residues. A compositionally biased stretch (low complexity) spans 1376 to 1392 (DPSQEPGPDSPGGSSPP). Phosphoserine is present on residues serine 1385 and serine 1390. Polar residues predominate over residues 1592 to 1610 (SSMTDDTSSPLSTGYNTRS). Residues serine 1627, serine 1631, and serine 1646 each carry the phosphoserine modification. Residues 1657–1700 (PELEEAERFEAQQGRTLRLLRAGYQCVAAHSELLCYFIIILNHM) traverse the membrane as a helical segment. Topologically, residues 1701 to 1704 (VTAS) are extracellular. The helical transmembrane segment at 1705-1720 (AASLVLPVLVFLWAML) threads the bilayer. The Cytoplasmic segment spans residues 1721–1728 (TIPRPSKR). Residues 1729–1747 (FWMTAIVFTEVMVVTKYLF) form a helical membrane-spanning segment. The Extracellular portion of the chain corresponds to 1748–1779 (QFGFFPWNSYVVLRRYENKPYFPPRILGLEKT). Residues 1780 to 1801 (DSYIKYDLVQLMALFFHRSQLL) traverse the membrane as a helical segment. At 1802–1976 (CYGLWDHEED…HTKYRAATDV (175 aa)) the chain is on the cytoplasmic side. 2 stretches are compositionally biased toward basic and acidic residues: residues 1816–1837 (DHCR…KLES) and 1855–1880 (PRDH…DLKP). The tract at residues 1816 to 1931 (DHCRSSVKDR…RPRHTQEKSK (116 aa)) is disordered. The segment covering 1881-1894 (RHTRHISIRFRRRK) has biased composition (basic residues). A compositionally biased stretch (basic and acidic residues) spans 1912–1931 (GEGKETTERKRPRHTQEKSK). Residues 1977-1996 (YALMFLADIVDIIIIIFGFW) traverse the membrane as a helical segment. Residues 1997–2016 (AFGKHSAATDIASSLSDDQV) are Extracellular-facing. A helical transmembrane segment spans residues 2017–2033 (PQAFLFMLLVQFGTMVI). At 2034–2047 (DRALYLRKTVLGKL) the chain is on the cytoplasmic side. The helical transmembrane segment at 2048–2068 (AFQVVLVVAIHIWMFFILPAV) threads the bilayer. Over 2069–2076 (TERMFSQN) the chain is Extracellular. The chain crosses the membrane as a helical span at residues 2077–2092 (AVAQLWYFVKCIYFAL). The Cytoplasmic portion of the chain corresponds to 2093 to 2192 (SAYQIRCGYP…KKKIVKYGMG (100 aa)). A helical transmembrane segment spans residues 2193-2213 (GLIILFLIAIIWFPLLFMSLI). Over 2214 to 2457 (RSVVGVVNQP…IFSDKVSPPS (244 aa)) the chain is Extracellular. Cysteine 2437 and cysteine 2441 are joined by a disulfide. The helical transmembrane segment at 2458 to 2478 (LGFLAGYGIVGLYVSIVLVVG) threads the bilayer. At 2479–2547 (KFVRGFFSEI…TMIKWTRERE (69 aa)) the chain is on the cytoplasmic side.

This sequence belongs to the PIEZO (TC 1.A.75) family. Homotrimer; the homotrimer forms a propeller-shaped Piezo channel with a cation-ion conducting pore. Heterotrimeric interaction may occur between PIEZO1 and PIEZO2. Interacts with PKD2. Interacts with STOMl3. Interacts with TMC1, TMC2, PCDG15 and CIB2; the interaction may be part of the MET complex. Interacts with MDFIC (via C-terminus); the interaction prolongs Piezo channel inactivation. Interacts with MDFI (via C-terminus); the interaction prolongs Piezo channel inactivation. Expressed in bladder, colon, kidney and skin. Also expressed in bone marrow, liver, lung, spleen and erythrocytes (at protein level). Expressed in myoblasts (at protein level). Expressed in red blood cells. Expressed in cochlear inner and outer hair cells (IHCs and OHCs) and vestibular organ HCs.

It is found in the endoplasmic reticulum membrane. The protein localises to the endoplasmic reticulum-Golgi intermediate compartment membrane. Its subcellular location is the cell membrane. It localises to the cell projection. The protein resides in the lamellipodium membrane. The enzyme catalyses K(+)(in) = K(+)(out). It carries out the reaction Na(+)(in) = Na(+)(out). It catalyses the reaction Ca(2+)(in) = Ca(2+)(out). The catalysed reaction is Mg(2+)(in) = Mg(2+)(out). Its activity is regulated as follows. Regulated by auxillary subunits MDFIC and MDFI. Down-regulated by phosphatidylserines exposed on the cell surface. Divalent ions decrease the single-channel permeability of K(+). Pore-forming subunit of the mechanosensitive non-specific cation Piezo channel required for rapidly adapting mechanically activated (MA) currents and has a key role in sensing touch and tactile pain. Piezo channels are homotrimeric three-blade propeller-shaped structures that utilize a cap-motion and plug-and-latch mechanism to gate their ion-conducting pathways. Generates currents characterized by a linear current-voltage relationship that are sensitive to ruthenium red and gadolinium. Conductance to monovalent alkali ions is highest for K(+), intermediate for Na(+) and lowest for Li(+). Divalent ions except for Mn(2+) permeate the channel but more slowly than the monovalent ions and they also reduce K(+) currents. Plays a key role in epithelial cell adhesion by maintaining integrin activation through R-Ras recruitment to the ER, most probably in its activated state, and subsequent stimulation of calpain signaling. In inner ear hair cells, PIEZO1/2 subunits may constitute part of the mechanotransducer (MET) non-selective cation channel complex where they may act as pore-forming ion-conducting component in the complex. In the kidney, may contribute to the detection of intraluminal pressure changes and to urine flow sensing. Acts as a shear-stress sensor that promotes endothelial cell organization and alignment in the direction of blood flow through calpain activation. Plays a key role in blood vessel formation and vascular structure in both development and adult physiology. Acts as a sensor of phosphatidylserine (PS) flipping at the plasma membrane and governs morphogenesis of muscle cells. In myoblasts, flippase-mediated PS enrichment at the inner leaflet of plasma membrane triggers channel activation and Ca(2+) influx followed by Rho GTPases signal transduction, leading to assembly of cortical actomyosin fibers and myotube formation. This is Piezo-type mechanosensitive ion channel component 1 from Mus musculus (Mouse).